Reading from the N-terminus, the 84-residue chain is Putative defensin-like protein 114 (84 aa).

The N-terminal stretch at 1–24 (MAITKKCFAAFVLILLFVMPFVYC) is a signal peptide. Intrachain disulfides connect cysteine 41–cysteine 81, cysteine 47–cysteine 69, cysteine 54–cysteine 79, and cysteine 58–cysteine 80.

Belongs to the DEFL family.

It is found in the secreted. The sequence is that of Putative defensin-like protein 114 from Arabidopsis thaliana (Mouse-ear cress).